A 246-amino-acid polypeptide reads, in one-letter code: Putative carboxymethylenebutenolidase (246 aa).

Active-site residues include Cys127, Asp183, and His215.

It belongs to the dienelactone hydrolase family.

The enzyme catalyses 2-(5-oxo-2,5-dihydrofuran-2-ylidene)acetate + H2O = 4-oxohex-2-enedioate + H(+). The chain is Putative carboxymethylenebutenolidase from Synechocystis sp. (strain ATCC 27184 / PCC 6803 / Kazusa).